The primary structure comprises 730 residues: Polyphosphate kinase (730 aa).

The span at 1 to 21 shows a compositional bias: basic and acidic residues; that stretch reads MMRHDRNVTEIDAETRPDENL. Residues 1-39 form a disordered region; that stretch reads MMRHDRNVTEIDAETRPDENLWHSGDSAVGAPPAATPAA. N86 serves as a coordination point for ATP. Mg(2+)-binding residues include R423 and R453. Residue H483 is the Phosphohistidine intermediate of the active site. ATP contacts are provided by Y516, R612, and H640.

Belongs to the polyphosphate kinase 1 (PPK1) family. Mg(2+) serves as cofactor. In terms of processing, an intermediate of this reaction is the autophosphorylated ppk in which a phosphate is covalently linked to a histidine residue through a N-P bond.

It carries out the reaction [phosphate](n) + ATP = [phosphate](n+1) + ADP. Catalyzes the reversible transfer of the terminal phosphate of ATP to form a long-chain polyphosphate (polyP). This is Polyphosphate kinase from Mycolicibacterium paratuberculosis (strain ATCC BAA-968 / K-10) (Mycobacterium paratuberculosis).